The following is an 84-amino-acid chain: Small ribosomal subunit protein uS17c (84 aa).

This sequence belongs to the universal ribosomal protein uS17 family. As to quaternary structure, part of the 30S ribosomal subunit.

Its subcellular location is the plastid. The protein resides in the chloroplast. In terms of biological role, one of the primary rRNA binding proteins, it binds specifically to the 5'-end of 16S ribosomal RNA. The polypeptide is Small ribosomal subunit protein uS17c (rps17) (Phaeodactylum tricornutum (strain CCAP 1055/1)).